A 426-amino-acid chain; its full sequence is Serine--tRNA ligase (426 aa).

Residue 232–234 coordinates L-serine; the sequence is TAE. 263–265 is a binding site for ATP; that stretch reads RSE. An L-serine-binding site is contributed by glutamate 286. Residue 350–353 coordinates ATP; that stretch reads EISS. Serine 385 lines the L-serine pocket.

Belongs to the class-II aminoacyl-tRNA synthetase family. Type-1 seryl-tRNA synthetase subfamily. In terms of assembly, homodimer. The tRNA molecule binds across the dimer.

It is found in the cytoplasm. The catalysed reaction is tRNA(Ser) + L-serine + ATP = L-seryl-tRNA(Ser) + AMP + diphosphate + H(+). It catalyses the reaction tRNA(Sec) + L-serine + ATP = L-seryl-tRNA(Sec) + AMP + diphosphate + H(+). Its pathway is aminoacyl-tRNA biosynthesis; selenocysteinyl-tRNA(Sec) biosynthesis; L-seryl-tRNA(Sec) from L-serine and tRNA(Sec): step 1/1. Functionally, catalyzes the attachment of serine to tRNA(Ser). Is also able to aminoacylate tRNA(Sec) with serine, to form the misacylated tRNA L-seryl-tRNA(Sec), which will be further converted into selenocysteinyl-tRNA(Sec). The sequence is that of Serine--tRNA ligase from Pediococcus pentosaceus (strain ATCC 25745 / CCUG 21536 / LMG 10740 / 183-1w).